Reading from the N-terminus, the 167-residue chain is Transcriptional repressor NrdR (167 aa).

Residues 3 to 34 (CPFCRNPDSRVVDSRMADDGSAIRRRRQCPEC) fold into a zinc finger. One can recognise an ATP-cone domain in the interval 46-136 (LSVIKRSGVG…VYQAFESLED (91 aa)). Residues 148–167 (AQEDAAERPATPRKPEKTSL) form a disordered region.

It belongs to the NrdR family. The cofactor is Zn(2+).

In terms of biological role, negatively regulates transcription of bacterial ribonucleotide reductase nrd genes and operons by binding to NrdR-boxes. The protein is Transcriptional repressor NrdR of Pseudarthrobacter chlorophenolicus (strain ATCC 700700 / DSM 12829 / CIP 107037 / JCM 12360 / KCTC 9906 / NCIMB 13794 / A6) (Arthrobacter chlorophenolicus).